The following is a 183-amino-acid chain: Protein jagunal homolog 1-B (183 aa).

The Cytoplasmic portion of the chain corresponds to 1-39 (MASRAGPRATGTDGSDYQHRERVASHYQMSVALKSEIKK). The helical transmembrane segment at 40 to 60 (LNIAHAVVWFLVAAQVLVSQL) threads the bilayer. Residues 61-71 (NLVSHKVVASP) lie on the Lumenal side of the membrane. A helical membrane pass occupies residues 72–92 (YQWEYTYLLSIIPTVFSFMAL). Residues 93–99 (PKNNISY) are Cytoplasmic-facing. A helical membrane pass occupies residues 100–120 (LVISMISGGLFCIGPILYGGM). Over 121 to 137 (EMFPVAQQLYRHGKAYR) the chain is Lumenal. The chain crosses the membrane as a helical span at residues 138–158 (FIFGFSAVSIMYLVLIISVQV). Topologically, residues 159–183 (HGWQIYYSKKLLDAWFTNTQDKKKK) are cytoplasmic.

The protein belongs to the jagunal family.

The protein localises to the endoplasmic reticulum membrane. Its function is as follows. Endoplasmic reticulum transmembrane protein involved in vesicle-mediated transport, which is required for neutrophil function. The sequence is that of Protein jagunal homolog 1-B (jagn1b) from Danio rerio (Zebrafish).